A 208-amino-acid polypeptide reads, in one-letter code: Putative 3-methyladenine DNA glycosylase (208 aa).

Belongs to the DNA glycosylase MPG family.

The chain is Putative 3-methyladenine DNA glycosylase from Lactobacillus delbrueckii subsp. bulgaricus (strain ATCC BAA-365 / Lb-18).